The following is a 322-amino-acid chain: Apolipoprotein E (322 aa).

The first 18 residues, 1 to 18, serve as a signal peptide directing secretion; that stretch reads MKVLWAALLVAFLAGCQG. 8 tandem repeats follow at residues 84–105, 106–127, 128–149, 150–171, 172–193, 194–215, 216–238, and 239–260. Positions 84 to 260 are 8 X 22 AA approximate tandem repeats; that stretch reads ALMDETMKEL…RLDEVKEQVE (177 aa). M147 carries the methionine sulfoxide modification. S151 is modified (phosphoserine). The interval 162 to 172 is LDL and other lipoprotein receptors binding; it reads HLRKLRKRLLR. Heparin is bound at residue 166–169; that stretch reads LRKR. Residues 214 to 295 are lipid-binding and lipoprotein association; the sequence is AATVGSSLAG…SWFEPLVEDM (82 aa). O-linked (GalNAc...) threonine glycosylation occurs at T216. Residue 234–241 coordinates heparin; it reads GERLRARM. The segment at 271 to 322 is homooligomerization; that stretch reads QQMRLQAEAFQARLKSWFEPLVEDMQRQWAGLVEKVQAAVGASAAPVPGDNH. A specificity for association with VLDL region spans residues 283–295; sequence RLKSWFEPLVEDM.

It belongs to the apolipoprotein A1/A4/E family. As to quaternary structure, homotetramer. May interact with ABCA1; functionally associated with ABCA1 in the biogenesis of HDLs. May interact with APP/A4 amyloid-beta peptide; the interaction is extremely stable in vitro but its physiological significance is unclear. May interact with MAPT. May interact with MAP2. In the cerebrospinal fluid, interacts with secreted SORL1. Interacts with PMEL; this allows the loading of PMEL luminal fragment on ILVs to induce fibril nucleation. Post-translationally, APOE exists as multiple glycosylated and sialylated glycoforms within cells and in plasma. The extent of glycosylation and sialylation are tissue and context specific. In terms of processing, glycated in plasma VLDL. Phosphorylated by FAM20C in the extracellular medium.

It localises to the secreted. Its subcellular location is the extracellular space. It is found in the extracellular matrix. The protein localises to the extracellular vesicle. The protein resides in the endosome. It localises to the multivesicular body. In terms of biological role, APOE is an apolipoprotein, a protein associating with lipid particles, that mainly functions in lipoprotein-mediated lipid transport between organs via the plasma and interstitial fluids. APOE is a core component of plasma lipoproteins and is involved in their production, conversion and clearance. Apolipoproteins are amphipathic molecules that interact both with lipids of the lipoprotein particle core and the aqueous environment of the plasma. As such, APOE associates with chylomicrons, chylomicron remnants, very low density lipoproteins (VLDL) and intermediate density lipoproteins (IDL) but shows a preferential binding to high-density lipoproteins (HDL). It also binds a wide range of cellular receptors including the LDL receptor/LDLR, the LDL receptor-related proteins LRP1, LRP2 and LRP8 and the very low-density lipoprotein receptor/VLDLR that mediate the cellular uptake of the APOE-containing lipoprotein particles. Finally, APOE also has a heparin-binding activity and binds heparan-sulfate proteoglycans on the surface of cells, a property that supports the capture and the receptor-mediated uptake of APOE-containing lipoproteins by cells. A main function of APOE is to mediate lipoprotein clearance through the uptake of chylomicrons, VLDLs, and HDLs by hepatocytes. APOE is also involved in the biosynthesis by the liver of VLDLs as well as their uptake by peripheral tissues ensuring the delivery of triglycerides and energy storage in muscle, heart and adipose tissues. By participating in the lipoprotein-mediated distribution of lipids among tissues, APOE plays a critical role in plasma and tissues lipid homeostasis. APOE is also involved in two steps of reverse cholesterol transport, the HDLs-mediated transport of cholesterol from peripheral tissues to the liver, and thereby plays an important role in cholesterol homeostasis. First, it is functionally associated with ABCA1 in the biogenesis of HDLs in tissues. Second, it is enriched in circulating HDLs and mediates their uptake by hepatocytes. APOE also plays an important role in lipid transport in the central nervous system, regulating neuron survival and sprouting. This chain is Apolipoprotein E (APOE), found in Ateles geoffroyi (Black-handed spider monkey).